The following is a 359-amino-acid chain: ELAV-like protein 2 (359 aa).

Positions 1 to 39 are disordered; the sequence is METQLSNGPTCNNTANGPTTVNNNCSSPVDSGNTEDSKT. RRM domains are found at residues 39-117 and 125-205; these read TNLI…YARP and ANLY…FANN. The residue at position 221 (serine 221) is a Phosphoserine. In terms of domain architecture, RRM 3 spans 276-354; that stretch reads WCIFVYNLAP…RVLQVSFKTN (79 aa).

The protein belongs to the RRM elav family. As to quaternary structure, interacts with IGF2BP1. Interacts with MAP1B light chain LC1.

Its function is as follows. RNA-binding protein that binds to the 3' untranslated region (3'UTR) of target mRNAs. Seems to recognize a GAAA motif. Can bind to its own 3'UTR, the FOS 3'UTR and the ID 3'UTR. The polypeptide is ELAV-like protein 2 (Elavl2) (Rattus norvegicus (Rat)).